We begin with the raw amino-acid sequence, 140 residues long: Resuscitation-promoting factor RpfC (140 aa).

Positions 1–31 (MTRIAKPLIKSAMAAGLVTASMSLSTAVAHA) are cleaved as a signal peptide.

This sequence belongs to the transglycosylase family. Rpf subfamily.

It localises to the secreted. Its function is as follows. Factor that stimulates resuscitation of dormant cells. Has peptidoglycan (PG) hydrolytic activity. This Mycobacterium tuberculosis (strain ATCC 35801 / TMC 107 / Erdman) protein is Resuscitation-promoting factor RpfC (rpfC).